A 177-amino-acid chain; its full sequence is R-phycoerythrin beta chain (177 aa).

(2R,3E)-phycoerythrobilin-binding residues include asparagine 35 and aspartate 39. Positions 50, 54, and 61 each coordinate phycourobilin. Residues asparagine 72, 77–78, cysteine 82, and 84–85 contribute to the (2R,3E)-phycoerythrobilin site; these read RR and RD. Asparagine 72 is subject to N4-methylasparagine. 147–148 contributes to the phycourobilin binding site; the sequence is SG. (2R,3E)-phycoerythrobilin is bound at residue cysteine 158.

This sequence belongs to the phycobiliprotein family. Heterododecamer of 6 alpha and 6 beta chains. The basic functional unit of phycobiliproteins is a ring-shaped hexamer formed from two back-to-back trimers contacting via the alpha chain subunits. The trimers are composed of alpha/beta subunit heterodimers arranged around a three-fold axis of symmetry. The phycoerythrins also contain a gamma subunit which is located in the center of the hexamer. Post-translationally, contains two covalently linked phycoerythrobilin chromophores and one covalently linked phycourobilin chromophore.

The protein resides in the plastid. The protein localises to the chloroplast thylakoid membrane. Light-harvesting photosynthetic tetrapyrrole chromophore-protein from the phycobiliprotein complex. This Griffithsia monilis (Red alga) protein is R-phycoerythrin beta chain (cpeB).